The chain runs to 129 residues: Glycine cleavage system H protein (129 aa).

A Lipoyl-binding domain is found at 24–106 (SVVVGVTQHA…YGAGWIVEIE (83 aa)). Residue lysine 65 is modified to N6-lipoyllysine.

This sequence belongs to the GcvH family. In terms of assembly, the glycine cleavage system is composed of four proteins: P, T, L and H. Requires (R)-lipoate as cofactor.

The glycine cleavage system catalyzes the degradation of glycine. The H protein shuttles the methylamine group of glycine from the P protein to the T protein. The sequence is that of Glycine cleavage system H protein from Myxococcus xanthus (strain DK1622).